An 885-amino-acid chain; its full sequence is Cytosolic carboxypeptidase-like protein 5 (885 aa).

Residues 150–576 (YPFSYAECQD…AVAVAALDMA (427 aa)) enclose the Peptidase M14 domain. The Zn(2+) site is built by His247 and Glu250. Disordered regions lie at residues 341–364 (SGSA…TERE) and 392–428 (ESWE…QVPP). A compositionally biased stretch (polar residues) spans 344–356 (ALKTSNQSNTSPP). Residues 393–408 (SWEKSGVQREAEHSDE) show a composition bias toward basic and acidic residues. A compositionally biased stretch (polar residues) spans 411–428 (SAQSRGETNSAPSEQVPP). His440 lines the Zn(2+) pocket. The active-site Proton donor/acceptor is Glu522. Polar residues predominate over residues 606-668 (STGLTSNNRR…KSSPSFTFGT (63 aa)). Disordered regions lie at residues 606–788 (STGL…RTAL) and 866–885 (ALLK…SLPT). A compositionally biased stretch (basic and acidic residues) spans 682–691 (RECKAQEKRR). Positions 712 to 749 (LSAPVRAPLSPSSSSSSSSSSPSSSSSAPGPGSISLAG) are enriched in low complexity.

This sequence belongs to the peptidase M14 family. The cofactor is Zn(2+).

The protein resides in the cytoplasm. It is found in the cytosol. The protein localises to the nucleus. Its subcellular location is the cytoskeleton. It localises to the spindle. The protein resides in the midbody. The enzyme catalyses gamma-L-glutamyl-L-glutamyl-[protein] + H2O = L-glutamyl-[protein] + L-glutamate. It carries out the reaction (L-glutamyl)(n+1)-gamma-L-glutamyl-L-glutamyl-[protein] + H2O = (L-glutamyl)(n)-gamma-L-glutamyl-L-glutamyl-[protein] + L-glutamate. The catalysed reaction is C-terminal L-alpha-aminoacyl-L-glutamyl-[tubulin] + H2O = C-terminal L-alpha-aminoacyl-[tubulin] + L-glutamate. It catalyses the reaction C-terminal L-alpha-aminoacyl-L-glutamyl-L-glutamyl-[tubulin] + H2O = C-terminal L-alpha-aminoacyl-L-glutamyl-[tubulin] + L-glutamate. Metallocarboxypeptidase that mediates deglutamylation of tubulin and non-tubulin target proteins. Catalyzes the removal of polyglutamate side chains present on the gamma-carboxyl group of glutamate residues within the C-terminal tail of alpha- and beta-tubulin. Cleaves alpha- and gamma-linked polyglutamate tubulin side-chain, as well as the branching point glutamate. Also catalyzes the removal of alpha-linked glutamate residues from the carboxy-terminus of alpha-tubulin. In Danio rerio (Zebrafish), this protein is Cytosolic carboxypeptidase-like protein 5 (agbl5).